Reading from the N-terminus, the 473-residue chain is Chaperone SurA (473 aa).

The signal sequence occupies residues Met1 to Ala36. PpiC domains lie at Ser214 to Glu315 and Ile326 to Glu425.

The protein localises to the periplasm. It carries out the reaction [protein]-peptidylproline (omega=180) = [protein]-peptidylproline (omega=0). In terms of biological role, chaperone involved in the correct folding and assembly of outer membrane proteins. Recognizes specific patterns of aromatic residues and the orientation of their side chains, which are found more frequently in integral outer membrane proteins. May act in both early periplasmic and late outer membrane-associated steps of protein maturation. This chain is Chaperone SurA, found in Polaromonas sp. (strain JS666 / ATCC BAA-500).